A 119-amino-acid polypeptide reads, in one-letter code: Large ribosomal subunit protein uL14m (119 aa).

It belongs to the universal ribosomal protein uL14 family.

Its subcellular location is the mitochondrion. In Tetrahymena pyriformis, this protein is Large ribosomal subunit protein uL14m.